Consider the following 206-residue polypeptide: Ribosomal RNA small subunit methyltransferase G (206 aa).

Residues Gly-73, Leu-78, 124–125, and Arg-139 contribute to the S-adenosyl-L-methionine site; that span reads VE.

Belongs to the methyltransferase superfamily. RNA methyltransferase RsmG family.

It localises to the cytoplasm. It carries out the reaction guanosine(527) in 16S rRNA + S-adenosyl-L-methionine = N(7)-methylguanosine(527) in 16S rRNA + S-adenosyl-L-homocysteine. Functionally, specifically methylates the N7 position of guanine in position 527 of 16S rRNA. The chain is Ribosomal RNA small subunit methyltransferase G from Serratia proteamaculans (strain 568).